We begin with the raw amino-acid sequence, 234 residues long: Small ribosomal subunit protein uS3 (234 aa).

The KH type-2 domain maps to 39 to 107 (VRKFLNKELA…PAQINIAEVK (69 aa)).

This sequence belongs to the universal ribosomal protein uS3 family. In terms of assembly, part of the 30S ribosomal subunit. Forms a tight complex with proteins S10 and S14.

In terms of biological role, binds the lower part of the 30S subunit head. Binds mRNA in the 70S ribosome, positioning it for translation. This Haemophilus ducreyi (strain 35000HP / ATCC 700724) protein is Small ribosomal subunit protein uS3.